The following is a 283-amino-acid chain: Probable endonuclease 4 (283 aa).

Positions 69, 109, 145, 179, 182, 216, 229, 231, and 261 each coordinate Zn(2+).

This sequence belongs to the AP endonuclease 2 family. Zn(2+) serves as cofactor.

It carries out the reaction Endonucleolytic cleavage to 5'-phosphooligonucleotide end-products.. Endonuclease IV plays a role in DNA repair. It cleaves phosphodiester bonds at apurinic or apyrimidinic (AP) sites, generating a 3'-hydroxyl group and a 5'-terminal sugar phosphate. This is Probable endonuclease 4 from Desulfosudis oleivorans (strain DSM 6200 / JCM 39069 / Hxd3) (Desulfococcus oleovorans).